Here is a 1786-residue protein sequence, read N- to C-terminus: MLSVHFWQTPVRPTDAASSLANGIQTPTHRRCQTSNWTGQLSSRTLATIAARAAAPWLQTTSAASFGSPPTSLWLAEAPPQGLKNWAVVATVAVVPTALGPAQARGNLFQATLWPLRDQRGTQDSPSAHHCLILSLKPGQGLRMEGGTSDMNSQTSLTPAEDPVSRPQDSPEPRQQLRPLPEPSASTLPEAKYVETCASAGLRRESPQTLKLPPEQQASRSPKTKAQDEPSGHAPEAPAPGESPASSQCLPSQACENDFSSSSSSSSSLVDSAEDNGLSKMDDPTKLLGVLATSSSSLGFESDPETSCRQHREEAGDRAGAGEDKRGGVDDGIASCKDIIAKSHSKRGPLRNEDAHYITTHEIQLTEVEQGMDFDVGLASRWDFEDNNVIYSFVDYASFGGSDETPGDITTEEDDDNSCYVSTTPSTNTTRTPSPISSDLARPGAGSSGRDTSSTEVGSGPSDSDTVPPPTGPGTATPPEPLLELREAALGASATAASSCGSAASQILLSIKPTSRAINEPSNVRAKQNIIYAAKHEGDMSLRVSSAAEHNSSSLKQNSAAAVAQDHAKKFIAVPARLQTRCGAIRAKELVDYASGASSAVSELDDADKEVRNLTSRAFRSLAYPYFEALNISSRESSTTLSEVGFGRWSTFLDLKCGGVGARVEQSLLRSSAASVAAGLRKGGGTRATADQLYLQTKKSQTKALEFVVSKVEGEIKHVETPLCFQKQVQTGSRVVTLLEPLNLRSESKASSATGPCRITKGSSKGPGSVYTDDGSETSESSKPASRSDGPQKKSKFASSLLKNVISKKMQREHEFKMERGEVTDTSHRNPPSTKETEGPPGAEKPWERGLQRQSSRHSEASSEYTVVSVSDAGGEGSVVGSKSPIFKASTPRESHTGSGQNVSDGHTEVCEIKKSASETVKGIFLRSQNSAFRTWKEKEAEKLEEKAPVGRLKLRKGGDWRADLGEISASKSTIMSRLFVPNIQQTPKDKQPEKQATKYPAAAAQATSVAVIRPKAPEIKIRLGSVQQPSSDFNIAKLLTPKLASGSSSKLFKTIEDNSRTQQKLFRGGDNLEKVPQFQVRDVRDKSKASGPLHQVRDVRKLIKGSGDSSDKGSVTPEQGLTGPKPRQLTPASGGSRSLSPMVIMCQAVANPREEGVDREPREGVSQVSNGGRLLNSSPEGTVLVHRASGRLPVATIAPNKSEQGSYLPVLKIVSKASAQRTPEKPKEEEAKEEGKAPKPARNALEKLTAAVRSMEELYSFNRNEWKRKSDPLPMMADSHVLSLIASEEKEGVAGPEGGDPDKLAKQLGQVEERDTGHKGGVVLRAAPIERLQRRNSNPSTESVSARAAAFENMARERPRSLYIPPVHKDVERTQPLQPLPPLPGNRNVFTVSSSSTQKTGGVAGKFPQGPSPEGLSTAKGIKAQGLRSLKISPATRAPPEDASNRKTAVSLEKSNSDCENYLTIPLKGSAASAELLGRPGASRDGPPSSSAATLCSLPPLSARSQVPSNPKGSQVSGTSRPAWRTKPDNHRETVVAAPTGPQSPEHTPTAVYHQQALPFTLQGAQPQVLCFSPPGMPAPAPAGPAAVPTDPFQQPQPQQTQRKMLLDVTTGQYYLVDTPVQPMTRRLFDPETGQYVDVPMTSQQQPVAPMSLPVPPLALSPGAYGPTYMIYPGFLPTVLPPNALQPTPMAHTPGGSELSVATEPPSKETAAAFTEAPYFMASSQSPASSSSSAPAATPQLVGAKGFAQLHGKPVISITSQPLGPRIIAPPSFDGTTMSFVVEHR.

Disordered stretches follow at residues Gln-140–Ala-191, Arg-203–Val-329, and Gly-400–Glu-480. The segment covering Ser-149–Thr-158 has biased composition (polar residues). Residues Gly-232–Ser-247 are compositionally biased toward low complexity. The segment covering Gln-248–Phe-259 has biased composition (polar residues). A compositionally biased stretch (basic and acidic residues) spans Thr-306–Val-329. The span at Ser-422–Ser-438 shows a compositional bias: low complexity. The span at Val-467–Glu-480 shows a compositional bias: pro residues. Thr-721 bears the Phosphothreonine mark. Disordered regions lie at residues Ser-746–His-907, Val-1081–Pro-1180, Ala-1218–Ala-1242, Lys-1291–Arg-1348, Ser-1362–Cys-1460, and Leu-1477–Pro-1550. Composition is skewed to basic and acidic residues over residues Met-810–His-828 and Lys-845–Ala-861. The segment covering Lys-1105–Ser-1115 has biased composition (low complexity). Polar residues predominate over residues Thr-1131–Leu-1140. Positions Pro-1153–Glu-1164 are enriched in basic and acidic residues. Polar residues predominate over residues Ser-1167–Pro-1180. Ser-1179 carries the post-translational modification Phosphoserine. Composition is skewed to basic and acidic residues over residues Thr-1223–Ala-1238 and Asp-1301–His-1319. Composition is skewed to polar residues over residues Arg-1336–Val-1345, Asn-1389–Thr-1401, and Ala-1504–Ser-1521. The residue at position 1767 (Arg-1767) is an Omega-N-methylarginine.

This is an uncharacterized protein from Mus musculus (Mouse).